The chain runs to 416 residues: NADH-quinone oxidoreductase subunit H (416 aa).

Helical transmembrane passes span 16–36, 84–104, 124–144, 165–185, 197–217, 260–280, 288–308, 320–340, and 353–373; these read LILA…LAAI, PVYL…FAVI, LAVA…GIVL, VVSY…YAGT, STWY…SMVG, VSAL…PISL, WWPL…YIWL, FMAI…MIVA, and WASG…VVLW.

Belongs to the complex I subunit 1 family. NDH-1 is composed of 14 different subunits. Subunits NuoA, H, J, K, L, M, N constitute the membrane sector of the complex.

Its subcellular location is the cell membrane. The catalysed reaction is a quinone + NADH + 5 H(+)(in) = a quinol + NAD(+) + 4 H(+)(out). In terms of biological role, NDH-1 shuttles electrons from NADH, via FMN and iron-sulfur (Fe-S) centers, to quinones in the respiratory chain. The immediate electron acceptor for the enzyme in this species is believed to be menaquinone. Couples the redox reaction to proton translocation (for every two electrons transferred, four hydrogen ions are translocated across the cytoplasmic membrane), and thus conserves the redox energy in a proton gradient. This subunit may bind ubiquinone. The protein is NADH-quinone oxidoreductase subunit H of Mycobacterium sp. (strain JLS).